A 939-amino-acid chain; its full sequence is Isoleucine--tRNA ligase (939 aa).

The 'HIGH' region motif lies at proline 57–histidine 67. Position 563 (glutamate 563) interacts with L-isoleucyl-5'-AMP. The short motif at lysine 604–serine 608 is the 'KMSKS' region element. Lysine 607 contributes to the ATP binding site. Cysteine 903, cysteine 906, cysteine 921, and cysteine 924 together coordinate Zn(2+).

The protein belongs to the class-I aminoacyl-tRNA synthetase family. IleS type 1 subfamily. In terms of assembly, monomer. The cofactor is Zn(2+).

The protein localises to the cytoplasm. It catalyses the reaction tRNA(Ile) + L-isoleucine + ATP = L-isoleucyl-tRNA(Ile) + AMP + diphosphate. Its function is as follows. Catalyzes the attachment of isoleucine to tRNA(Ile). As IleRS can inadvertently accommodate and process structurally similar amino acids such as valine, to avoid such errors it has two additional distinct tRNA(Ile)-dependent editing activities. One activity is designated as 'pretransfer' editing and involves the hydrolysis of activated Val-AMP. The other activity is designated 'posttransfer' editing and involves deacylation of mischarged Val-tRNA(Ile). In Sulfurihydrogenibium sp. (strain YO3AOP1), this protein is Isoleucine--tRNA ligase.